Reading from the N-terminus, the 128-residue chain is Sm-like protein LSM1B (128 aa).

The Sm domain occupies Tyr10–Glu85.

The protein belongs to the snRNP Sm proteins family. Component of the heptameric LSM1-LSM7 complex that forms a seven-membered ring structure with a donut shape. The LSM subunits are arranged in the order LSM1, LSM2, LSM3, LSM6, LSM5, LSM7 and LSM4. LSM1B subunit interacts only with its two neighboring subunits, LSM2 and LSM4. In terms of tissue distribution, expressed in roots, leaves, stems, flowers and siliques.

The protein resides in the cytoplasm. It localises to the P-body. Its function is as follows. Component of the cytoplasmic LSM1-LSM7 complex which is involved in mRNA degradation by promoting decapping and leading to accurate 5'-3' mRNA decay. LSM1A and LSM1B are essential for the formation of the cytoplasmic LSM1-LSM7 complex which regulates developmental gene expression by the decapping of specific development-related transcripts. Required for P-body formation during heat stress. This is Sm-like protein LSM1B from Arabidopsis thaliana (Mouse-ear cress).